Here is a 135-residue protein sequence, read N- to C-terminus: Peptide methionine sulfoxide reductase MsrB (135 aa).

Residues 13-135 (DADWREQLTP…NGHSMVFEPV (123 aa)) form the MsrB domain. 4 residues coordinate Zn(2+): cysteine 52, cysteine 55, cysteine 101, and cysteine 104. The Nucleophile role is filled by cysteine 124.

It belongs to the MsrB Met sulfoxide reductase family. It depends on Zn(2+) as a cofactor.

The catalysed reaction is L-methionyl-[protein] + [thioredoxin]-disulfide + H2O = L-methionyl-(R)-S-oxide-[protein] + [thioredoxin]-dithiol. The protein is Peptide methionine sulfoxide reductase MsrB of Agrobacterium fabrum (strain C58 / ATCC 33970) (Agrobacterium tumefaciens (strain C58)).